A 783-amino-acid chain; its full sequence is Heat shock transcription factor (783 aa).

Residues 1 to 59 (MTTNLYAIAGPSKPTTPTSTPSPRSEPPSPLKSLTSLPTNPLNSHGTSTPNTLTNQLSS) are disordered. Composition is skewed to low complexity over residues 11-23 (PSKP…TPSP) and 31-42 (LKSLTSLPTNPL). Polar residues predominate over residues 43-59 (NSHGTSTPNTLTNQLSS). Residues 78–168 (MKVPAFLNKL…PIELWEFANP (91 aa)) mediate DNA binding. A disordered region spans residues 181-262 (VTRKNNRPSN…PGSVPPSHTS (82 aa)). Low complexity-rich tracts occupy residues 189-199 (SNSGVGPSSSV) and 209-233 (STRS…ISQG). Positions 238–262 (NHSTSGKYLITDGTTPGSVPPSHTS) are enriched in polar residues. Positions 280–333 (GIAAIRQTQASIATDLRKLQASNEALWRQAYETQEKQRKHEETIDLIVSFLERL) are involved in trimerization. 2 stretches are compositionally biased toward basic and acidic residues: residues 350 to 372 (RGVG…SRFA) and 399 to 415 (TGEH…DRLV). 3 disordered regions span residues 350-554 (RGVG…LLSP), 599-652 (QALA…TLAL), and 736-783 (QGLA…KSES). Polar residues predominate over residues 418–448 (GSNSEYSIPSVKRTSSSSHPISLGQLGSSRF). Composition is skewed to low complexity over residues 452-467 (PSED…GSTS), 497-511 (LSPL…PSSS), 522-550 (PFPS…PSQP), and 616-632 (NPNG…AHGM). A compositionally biased stretch (acidic residues) spans 742-752 (GEEEGEREVEG). A compositionally biased stretch (gly residues) spans 753–765 (DGGVSSSGAGAGA).

Belongs to the HSF family. In terms of assembly, homotrimer. Homotrimerization increases the affinity of HSF1 to DNA. Interacts with transcriptional coregulator SSA1 on chromatin.

It is found in the nucleus. Its function is as follows. DNA-binding transcription factor that specifically binds heat shock promoter elements (HSE) and activates transcription. Together with its coregulator SSA1, activates expression of laccase LAC1 during glucose starvation. This is Heat shock transcription factor from Cryptococcus neoformans var. neoformans serotype D (strain JEC21 / ATCC MYA-565) (Filobasidiella neoformans).